The sequence spans 149 residues: 3-dehydroquinate dehydratase (149 aa).

The active-site Proton acceptor is the Y22. Substrate-binding residues include N74, H80, and D87. H100 serves as the catalytic Proton donor. Residues 101–102 and R111 each bind substrate; that span reads LS.

Belongs to the type-II 3-dehydroquinase family. As to quaternary structure, homododecamer.

The catalysed reaction is 3-dehydroquinate = 3-dehydroshikimate + H2O. It participates in metabolic intermediate biosynthesis; chorismate biosynthesis; chorismate from D-erythrose 4-phosphate and phosphoenolpyruvate: step 3/7. Its function is as follows. Catalyzes a trans-dehydration via an enolate intermediate. In Vesicomyosocius okutanii subsp. Calyptogena okutanii (strain HA), this protein is 3-dehydroquinate dehydratase.